The following is a 608-amino-acid chain: DNA ligase (608 aa).

Glu266 serves as a coordination point for ATP. Residue Lys268 is the N6-AMP-lysine intermediate of the active site. ATP is bound by residues Arg273, Arg288, Glu318, Phe358, Arg435, and Lys441.

Belongs to the ATP-dependent DNA ligase family. The cofactor is Mg(2+). It depends on Mn(2+) as a cofactor.

It carries out the reaction ATP + (deoxyribonucleotide)n-3'-hydroxyl + 5'-phospho-(deoxyribonucleotide)m = (deoxyribonucleotide)n+m + AMP + diphosphate.. It catalyses the reaction ADP + (deoxyribonucleotide)n-3'-hydroxyl + 5'-phospho-(deoxyribonucleotide)m = (deoxyribonucleotide)n+m + AMP + phosphate.. The enzyme catalyses GTP + (deoxyribonucleotide)n-3'-hydroxyl + 5'-phospho-(deoxyribonucleotide)m = (deoxyribonucleotide)n+m + GMP + diphosphate.. Its function is as follows. DNA ligase that seals nicks in double-stranded DNA during DNA replication, DNA recombination and DNA repair. Can use ATP, ADP and GTP, but not CTP, TTP or NAD(+). The chain is DNA ligase from Hyperthermus butylicus (strain DSM 5456 / JCM 9403 / PLM1-5).